Here is a 1612-residue protein sequence, read N- to C-terminus: uncharacterized protein (1612 aa).

Residues 23–52 are a coiled coil; it reads ENKNIEMTTLKDKKEMKNENLSKINVKKEN. Residues 46-93 show a composition bias toward basic and acidic residues; it reads INVKKENHDKNHDKNHDKNHDKNHDKNHDKNHDKNHDKNHDKNHDKNH. Disordered regions lie at residues 46–94 and 369–400; these read INVK…KNHV and EDDN…HEIQ. Residues 375 to 394 are compositionally biased toward polar residues; the sequence is DNPLYSNNNTLKEQNTSTPL. The helical transmembrane segment at 479 to 499 threads the bilayer; sequence FIVTLSEICLILTPHYVNIIN. Disordered regions lie at residues 698–777, 992–1037, 1091–1157, and 1257–1291; these read TSLT…EKKL, NELD…KNDP, SGKS…RNMS, and NQTT…NQDK. A compositionally biased stretch (basic and acidic residues) spans 708-777; that stretch reads KNDEIKKTGE…KKKTGEEKKL (70 aa). Low complexity-rich tracts occupy residues 996-1028, 1102-1140, and 1257-1271; these read NNNN…NNNN, SNNN…NSTN, and NQTT…QTSN. 3 coiled-coil regions span residues 1338–1362, 1444–1469, and 1553–1601; these read YCNN…INNK, SNKK…IDND, and NMED…KFLT. Residues 1554-1566 show a composition bias toward basic and acidic residues; that stretch reads MEDEKNEKLNDKE. Residues 1554-1612 form a disordered region; that stretch reads MEDEKNEKLNDKEGEYEDVTENLNEQEAEEEAEEEAEEEEEEEDKFLTPEHLPINVEIK. Over residues 1567–1597 the composition is skewed to acidic residues; the sequence is GEYEDVTENLNEQEAEEEAEEEAEEEEEEED.

It is found in the membrane. This is an uncharacterized protein from Plasmodium falciparum (isolate 3D7).